A 474-amino-acid polypeptide reads, in one-letter code: MWRVRKRGYFGIWSFPLIIAAVCAQSVNDPSNMSLVKETVDRLLKGYDIRLRPDFGGPPVAVGMNIDIASIDMVSEVNMDYTLTMYFQQAWRDKRLSYNVIPLNLTLDNRVADQLWVPDTYFLNDKKSFVHGVTVKNRMIRLHPDGTVLYGLRITTTAACMMDLRRYPLDEQNCTLEIESYGYTTDDIEFYWRGDDNAVTGVTKIELPQFSIVDYKLITKKVVFSTGSYPRLSLSFKLKRNIGYFILQTYMPSILITILSWVSFWINYDASAARVALGITTVLTMTTINTHLRETLPKIPYVKAIDMYLMGCFVFVFMALLEYALVNYIFFGRGPQRQKKAAEKAANANNEKMRLDVNKMDPHENILLSTLEIKNEMATSEAVMGLGDPRSTMLAYDASSIQYRKAGLPRHSFGRNALERHVAQKKSRLRRRASQLKITIPDLTDVNAIDRWSRIFFPVVFSFFNIVYWLYYVN.

Positions 1 to 25 (MWRVRKRGYFGIWSFPLIIAAVCAQ) are cleaved as a signal peptide. Topologically, residues 26–244 (SVNDPSNMSL…SFKLKRNIGY (219 aa)) are extracellular. N-linked (GlcNAc...) asparagine glycans are attached at residues Asn-32 and Asn-104. Tyr-121 is a histamine binding site. Cys-160 and Cys-174 are oxidised to a cystine. The N-linked (GlcNAc...) asparagine glycan is linked to Asn-173. Histamine-binding positions include 180–181 (SY) and Thr-226. 2 residues coordinate 4-aminobutanoate: Tyr-181 and Thr-226. Helical transmembrane passes span 245-266 (FILQTYMPSILITILSWVSFWI), 270-292 (ASAARVALGITTVLTMTTINTHL), and 304-326 (AIDMYLMGCFVFVFMALLEYALV). Over 327 to 451 (NYIFFGRGPQ…DLTDVNAIDR (125 aa)) the chain is Cytoplasmic. Tyr-403 is modified (phosphotyrosine). A helical membrane pass occupies residues 452-473 (WSRIFFPVVFSFFNIVYWLYYV).

Belongs to the ligand-gated ion channel (TC 1.A.9) family. Gamma-aminobutyric acid receptor (TC 1.A.9.5) subfamily. GABRB2 sub-subfamily. Heteropentamer, formed by a combination of alpha (GABRA1-6), beta (GABRB1-3), gamma (GABRG1-3), delta (GABRD), epsilon (GABRE), rho (GABRR1-3), pi (GABRP) and theta (GABRQ) chains, each subunit exhibiting distinct physiological and pharmacological properties. Interacts with UBQLN1. May interact with KIF21B. Identified in a complex of 720 kDa composed of LHFPL4, NLGN2, GABRA1, GABRB2, GABRG2 and GABRB3. Glycosylated. As to expression, expressed in brain (at protein level), in cerebellar granule cells. Expressed in lungs, in alveolar epithelium.

Its subcellular location is the postsynaptic cell membrane. The protein localises to the cell membrane. The protein resides in the cytoplasmic vesicle membrane. The enzyme catalyses chloride(in) = chloride(out). Its activity is regulated as follows. Allosterically activated by benzodiazepines and the anesthetic etomidate. Inhibited by the antagonist bicuculline. Potentiated by histamine. In terms of biological role, beta subunit of the heteropentameric ligand-gated chloride channel gated by gamma-aminobutyric acid (GABA), a major inhibitory neurotransmitter in the brain. GABA-gated chloride channels, also named GABA(A) receptors (GABAAR), consist of five subunits arranged around a central pore and contain GABA active binding site(s) located at the alpha and beta subunit interface(s). When activated by GABA, GABAARs selectively allow the flow of chloride anions across the cell membrane down their electrochemical gradient. Chloride influx into the postsynaptic neuron following GABAAR opening decreases the neuron ability to generate a new action potential, thereby reducing nerve transmission. GABAARs containing alpha-1 and beta-2 or -3 subunits exhibit synaptogenic activity; the gamma-2 subunit being necessary but not sufficient to induce rapid synaptic contacts formation. Extrasynaptic beta-2 receptors contribute to the tonic GABAergic inhibition. Beta-containing GABAARs can simultaneously bind GABA and histamine where histamine binds at the interface of two neighboring beta subunits, which may be involved in the regulation of sleep and wakefulness. This Rattus norvegicus (Rat) protein is Gamma-aminobutyric acid receptor subunit beta-2.